Here is a 183-residue protein sequence, read N- to C-terminus: MGALIGEMIALSLMALALGMDAFSVALGMGLLRLRLRQIFYIGLTIGLFHIFMPLVGMAVGRFLSREFGSIATYAGGVLLLWLGGQMIVTSFQQEEGTSFLPHGAGLLFFAFSVSLDSFSVGLSLGIFGARTMATILLFGLFSTVLTWIGLLVGRHFRQWLGSYSEALGGSILLVFGLKLLFS.

Helical transmembrane passes span 8–28 (MIALSLMALALGMDAFSVALG), 39–59 (IFYIGLTIGLFHIFMPLVGMA), 68–88 (FGSIATYAGGVLLLWLGGQMI), 108–128 (LFFAFSVSLDSFSVGLSLGIF), 133–153 (MATILLFGLFSTVLTWIGLLV), and 162–182 (GSYSEALGGSILLVFGLKLLF).

It belongs to the MntP (TC 9.B.29) family.

The protein resides in the cell membrane. Its function is as follows. Probably functions as a manganese efflux pump. The chain is Putative manganese efflux pump MntP from Geobacillus thermodenitrificans (strain NG80-2).